Reading from the N-terminus, the 343-residue chain is L-threonine 3-dehydrogenase (343 aa).

C39 is a Zn(2+) binding site. Residues T41 and H44 each act as charge relay system in the active site. Zn(2+) is bound by residues H64, E65, C94, C97, C100, and C108. Residues I176, D196, R201, L263 to I265, and I287 to Y288 each bind NAD(+).

The protein belongs to the zinc-containing alcohol dehydrogenase family. Homotetramer. It depends on Zn(2+) as a cofactor.

It localises to the cytoplasm. It catalyses the reaction L-threonine + NAD(+) = (2S)-2-amino-3-oxobutanoate + NADH + H(+). It functions in the pathway amino-acid degradation; L-threonine degradation via oxydo-reductase pathway; glycine from L-threonine: step 1/2. In terms of biological role, catalyzes the NAD(+)-dependent oxidation of L-threonine to 2-amino-3-ketobutyrate. This chain is L-threonine 3-dehydrogenase, found in Anaeromyxobacter sp. (strain Fw109-5).